We begin with the raw amino-acid sequence, 124 residues long: CRISPR-associated endoribonuclease Cas2 4 (124 aa).

Mg(2+) is bound at residue Asp40.

Belongs to the CRISPR-associated endoribonuclease Cas2 protein family. Homodimer, forms a heterotetramer with a Cas1 homodimer. The cofactor is Mg(2+).

CRISPR (clustered regularly interspaced short palindromic repeat), is an adaptive immune system that provides protection against mobile genetic elements (viruses, transposable elements and conjugative plasmids). CRISPR clusters contain sequences complementary to antecedent mobile elements and target invading nucleic acids. CRISPR clusters are transcribed and processed into CRISPR RNA (crRNA). Functions as a ssRNA-specific endoribonuclease. Involved in the integration of spacer DNA into the CRISPR cassette. The sequence is that of CRISPR-associated endoribonuclease Cas2 4 from Rhodospirillum rubrum (strain ATCC 11170 / ATH 1.1.1 / DSM 467 / LMG 4362 / NCIMB 8255 / S1).